A 365-amino-acid chain; its full sequence is Donuts protein 1 (365 aa).

The segment at 28–49 (NSGLELPSQDYTNVEEKESSPK) is disordered. Residues 82-125 (EKLCVLKELKIAFPEVDDTLIKAILIASQGVLEPAFNSLLYYSS) form the CUE domain. Disordered regions lie at residues 215 to 246 (HNTI…KGVN) and 286 to 335 (ESEE…YKSA). Basic and acidic residues predominate over residues 224 to 244 (SILKGKEKGKEEEKEKGEEKG). The segment covering 286-295 (ESEEEEEQDV) has biased composition (acidic residues). Positions 315–331 (EAQRDSADRLPAKDDGG) are enriched in basic and acidic residues.

In terms of assembly, may interact directly with ADY3. Probable component of a spindle pole body (SPB) complex composed of ADY3, SSP1, DON1, MPC54, SPO21/MPC70, NUD1 and CNM67.

The protein localises to the prospore membrane. Functionally, involved in the pathway that organizes the prospore membrane (PSM) during sporulation. The sequence is that of Donuts protein 1 (DON1) from Saccharomyces cerevisiae (strain ATCC 204508 / S288c) (Baker's yeast).